Reading from the N-terminus, the 405-residue chain is Tyrosine--tRNA ligase (405 aa).

Residue tyrosine 35 participates in L-tyrosine binding. Residues 40 to 49 carry the 'HIGH' region motif; sequence ATSSSLHIGH. Tyrosine 166 and glutamine 170 together coordinate L-tyrosine. A 'KMSKS' region motif is present at residues 226–230; that stretch reads KMGKS. Residue lysine 229 coordinates ATP. The 66-residue stretch at 340–405 folds into the S4 RNA-binding domain; sequence ILLVDLMLDS…GKKKFLRIVI (66 aa).

This sequence belongs to the class-I aminoacyl-tRNA synthetase family. TyrS type 1 subfamily. As to quaternary structure, homodimer.

Its subcellular location is the cytoplasm. It catalyses the reaction tRNA(Tyr) + L-tyrosine + ATP = L-tyrosyl-tRNA(Tyr) + AMP + diphosphate + H(+). In terms of biological role, catalyzes the attachment of tyrosine to tRNA(Tyr) in a two-step reaction: tyrosine is first activated by ATP to form Tyr-AMP and then transferred to the acceptor end of tRNA(Tyr). In Borreliella burgdorferi (strain ATCC 35210 / DSM 4680 / CIP 102532 / B31) (Borrelia burgdorferi), this protein is Tyrosine--tRNA ligase.